Here is a 570-residue protein sequence, read N- to C-terminus: Serine/threonine-protein kinase flr-4 (570 aa).

The Protein kinase domain occupies 40–331 (YKYIQDLGKG…KLRIQIKKIL (292 aa)). Residues 46–54 (LGKGRFGTV) and Lys-67 each bind ATP. Catalysis depends on Asp-172, which acts as the Proton acceptor. A disordered region spans residues 338-369 (EEETDISHPISNSNTDSSTAISHNHSNDRKVG). Residues 346-361 (PISNSNTDSSTAISHN) show a composition bias toward polar residues. 3 helical membrane passes run 400 to 420 (IMQI…FLNI), 425 to 445 (ICYL…FLLI), and 471 to 491 (LIIS…CCMV). The interval 550–570 (VRRNHDDYYYDESSGPANEEN) is disordered.

It belongs to the protein kinase superfamily. Ser/Thr protein kinase family. In terms of tissue distribution, present in the intestinal cells from comma-stage embryos through the adult stage, although the intestinal expression is weaker after the L1 stage. Accumulates at the cell membrane of intestinal cells, especially the lateral membrane intervening the intestinal cells. Also detected in the muscles of the pharyngeal isthmus from the 3-fold embryonic stage, and in a pair of head neurons, which correspond to the AUA neurons, from the late L1 stage (at protein level).

It localises to the membrane. The catalysed reaction is L-seryl-[protein] + ATP = O-phospho-L-seryl-[protein] + ADP + H(+). It carries out the reaction L-threonyl-[protein] + ATP = O-phospho-L-threonyl-[protein] + ADP + H(+). In terms of biological role, probable serine-threonine protein kinase involved in the control of defecation rhythms. Required to increase the length of defecation cycle period. Acts in a cell-functional rather than developmental aspect in the regulation of defecation rhythms. Prevents preferential activation of the p38 MAPK pathway in response to the levels of vitamin B12 in different food types during larval development, thereby regulating the expression of cytoprotective genes, modulating life span and stress tolerance. This Caenorhabditis elegans protein is Serine/threonine-protein kinase flr-4 (flr-4).